A 424-amino-acid chain; its full sequence is Zinc metalloproteinase-disintegrin-like brevilysin H2a (424 aa).

Q1 is subject to Pyrrolidone carboxylic acid. One can recognise a Peptidase M12B domain in the interval 9-207 (RYVKLAIVAD…YKPQCILNEP (199 aa)). N69 is a glycosylation site (N-linked (GlcNAc...) asparagine). D96 is a binding site for Ca(2+). 3 disulfide bridges follow: C120-C202, C164-C186, and C166-C169. H145 serves as a coordination point for Zn(2+). E146 is a catalytic residue. H149 and H155 together coordinate Zn(2+). N-linked (GlcNAc...) asparagine glycosylation is present at N185. Residues C202, N205, V217, N220, L222, E224, E227, and D230 each contribute to the Ca(2+) site. The region spanning 215–301 (PPVCGNELLE…DCPTDDLQRN (87 aa)) is the Disintegrin domain. Disulfide bonds link C218-C247, C229-C242, C231-C237, C241-C264, C255-C261, C260-C286, C273-C293, C280-C312, C305-C317, C324-C374, C339-C385, C352-C362, C369-C411, and C405-C417. The short motif at 279-281 (DCD) is the D/ECD-tripeptide element. Residues D281, E284, and D296 each contribute to the Ca(2+) site. An N-linked (GlcNAc...) asparagine glycan is attached at N331.

This sequence belongs to the venom metalloproteinase (M12B) family. P-III subfamily. P-IIIa sub-subfamily. As to quaternary structure, monomer. It depends on Zn(2+) as a cofactor. Post-translationally, glycosylated. As to expression, expressed by the venom gland.

The protein localises to the secreted. Its activity is regulated as follows. Its proteolytic activity is inhibited by EDTA, TPEN, 1,10-phenanthroline, and some thiol compounds, but is enhanced by alkaline earth metal ions (Mg2+, Ca2+, Sr2+, and Ba2+). Its activity is not modulated by urea (4 M). Its function is as follows. Non-hemorrhagic metalloproteinase that degrades fibrinogen. The alpha chain (FGA) is rapidly degraded, the beta chain (FGB) is degraded very slowly, while the gamma chain is left intact. Shows a prefential cleavage at X-Leu bonds. Cleaves insulin B chain at '29-His-|-Leu-30', '33-Ser-|-His-34', '38-Ala-|-Leu-39' and '40-Tyr-|-Leu-41' bonds. The chain is Zinc metalloproteinase-disintegrin-like brevilysin H2a from Gloydius brevicauda (Korean slamosa snake).